The chain runs to 181 residues: NAD(P)H-quinone oxidoreductase subunit I, chloroplastic (181 aa).

2 4Fe-4S ferredoxin-type domains span residues 52–81 (GRIHFEFDKCIACEVCVRVCPINLPVVDWE) and 92–121 (KSYSIDFGVCIFCGNCVEYCPTNCLSMTEE). Cysteine 61, cysteine 64, cysteine 67, cysteine 71, cysteine 101, cysteine 104, cysteine 107, and cysteine 111 together coordinate [4Fe-4S] cluster.

This sequence belongs to the complex I 23 kDa subunit family. As to quaternary structure, NDH is composed of at least 16 different subunits, 5 of which are encoded in the nucleus. [4Fe-4S] cluster is required as a cofactor.

It localises to the plastid. Its subcellular location is the chloroplast thylakoid membrane. It catalyses the reaction a plastoquinone + NADH + (n+1) H(+)(in) = a plastoquinol + NAD(+) + n H(+)(out). It carries out the reaction a plastoquinone + NADPH + (n+1) H(+)(in) = a plastoquinol + NADP(+) + n H(+)(out). Functionally, NDH shuttles electrons from NAD(P)H:plastoquinone, via FMN and iron-sulfur (Fe-S) centers, to quinones in the photosynthetic chain and possibly in a chloroplast respiratory chain. The immediate electron acceptor for the enzyme in this species is believed to be plastoquinone. Couples the redox reaction to proton translocation, and thus conserves the redox energy in a proton gradient. The protein is NAD(P)H-quinone oxidoreductase subunit I, chloroplastic of Zygnema circumcarinatum (Green alga).